The chain runs to 496 residues: Myotilin (496 aa).

The interval 1-37 is disordered; sequence MFNYERPKHFIQPQNPCGSRLQPPGPEVSGFPSQTKQ. The residue at position 20 (Arg20) is an Omega-N-methylarginine. A necessary for interaction with ACTN1 region spans residues 78 to 149; sequence PNPGQKVTAT…PTPKTPDHEI (72 aa). 2 stretches are compositionally biased toward polar residues: residues 202–213 and 221–233; these read NSDVQDSPQHNP and PTSQ…SSRA. A disordered region spans residues 202 to 239; that stretch reads NSDVQDSPQHNPEQARLHVPTSQVRSRSSSRAEANDQD. The interval 213-491 is necessary for interaction with FLNC; sequence PEQARLHVPT…QRLAAQSGLY (279 aa). The tract at residues 213–496 is necessary for interaction with ACTA1; that stretch reads PEQARLHVPT…QSGLYESEEL (284 aa). Ig-like C2-type domains follow at residues 248–333 and 347–439; these read PRFI…ATFT and PMFI…LDVT.

It belongs to the myotilin/palladin family. Homodimer. Interacts with ACTA1, ACTN1, FLNA, FLNB, FLNC, and MYOZ2. Interacts with the C-terminal region of MYOZ1. Expressed in skeletal muscle (at protein level).

The protein resides in the cell membrane. The protein localises to the sarcolemma. Its subcellular location is the cytoplasm. It localises to the cytoskeleton. It is found in the myofibril. The protein resides in the sarcomere. The protein localises to the z line. In terms of biological role, component of a complex of multiple actin cross-linking proteins. Involved in the control of myofibril assembly and stability at the Z lines in muscle cells. This is Myotilin (Myot) from Mus musculus (Mouse).